The sequence spans 111 residues: Somatostatin-1B (111 aa).

Positions 1 to 19 (MQLLSSLVSLLLVLYSVRA) are cleaved as a signal peptide. Residues 20–87 (AAVLPVEERN…RLEERAVYNR (68 aa)) constitute a propeptide that is removed on maturation. Cys-100 and Cys-111 are disulfide-bonded.

The protein belongs to the somatostatin family.

Its subcellular location is the secreted. Functionally, somatostatin inhibits the release of somatotropin. In Carassius auratus (Goldfish), this protein is Somatostatin-1B (sst1b).